A 280-amino-acid chain; its full sequence is Putative pyruvate, phosphate dikinase regulatory protein (280 aa).

152-159 contacts ADP; that stretch reads GISRTSKT.

The protein belongs to the pyruvate, phosphate/water dikinase regulatory protein family. PDRP subfamily.

The enzyme catalyses N(tele)-phospho-L-histidyl/L-threonyl-[pyruvate, phosphate dikinase] + ADP = N(tele)-phospho-L-histidyl/O-phospho-L-threonyl-[pyruvate, phosphate dikinase] + AMP + H(+). It carries out the reaction N(tele)-phospho-L-histidyl/O-phospho-L-threonyl-[pyruvate, phosphate dikinase] + phosphate + H(+) = N(tele)-phospho-L-histidyl/L-threonyl-[pyruvate, phosphate dikinase] + diphosphate. Its function is as follows. Bifunctional serine/threonine kinase and phosphorylase involved in the regulation of the pyruvate, phosphate dikinase (PPDK) by catalyzing its phosphorylation/dephosphorylation. The protein is Putative pyruvate, phosphate dikinase regulatory protein of Clostridioides difficile (strain 630) (Peptoclostridium difficile).